Consider the following 317-residue polypeptide: 17-beta-hydroxysteroid dehydrogenase type 6 (317 aa).

Positions 1–17 are cleaved as a signal peptide; it reads MWFYLVTLVGLYYLLRW. 33-57 is a binding site for NAD(+); that stretch reads FITGCDSGFGNLLARQLDRRGMRVL. Asparagine 161 carries N-linked (GlcNAc...) asparagine glycosylation. Serine 164 lines the substrate pocket. Tyrosine 176 functions as the Proton acceptor in the catalytic mechanism.

This sequence belongs to the short-chain dehydrogenases/reductases (SDR) family. Detected in prostate, liver and kidney.

The protein resides in the microsome membrane. The protein localises to the endoplasmic reticulum membrane. The catalysed reaction is all-trans-retinol--[retinol-binding protein] + NAD(+) = all-trans-retinal--[retinol-binding protein] + NADH + H(+). It catalyses the reaction all-trans-retinol + NAD(+) = all-trans-retinal + NADH + H(+). The enzyme catalyses androsterone + NAD(+) = 5alpha-androstan-3,17-dione + NADH + H(+). It carries out the reaction testosterone + NAD(+) = androst-4-ene-3,17-dione + NADH + H(+). The catalysed reaction is 5alpha-androstane-3alpha,17beta-diol + NAD(+) = 17beta-hydroxy-5alpha-androstan-3-one + NADH + H(+). It catalyses the reaction 17beta-estradiol + NAD(+) = estrone + NADH + H(+). The enzyme catalyses 17beta-estradiol + NADP(+) = estrone + NADPH + H(+). It carries out the reaction 3alpha-hydroxy-5alpha-pregnan-20-one + NAD(+) = 5alpha-pregnane-3,20-dione + NADH + H(+). The catalysed reaction is 5alpha-androstane-3beta,17beta-diol + NAD(+) = 17beta-hydroxy-5alpha-androstan-3-one + NADH + H(+). It catalyses the reaction 3beta-hydroxy-5alpha-androstan-17-one + NAD(+) = 5alpha-androstan-3,17-dione + NADH + H(+). With respect to regulation, competitively inhibited by 9-cis-retinoic acid and 13-cis-retinoic acid. NAD-dependent oxidoreductase with broad substrate specificity that shows both oxidative and reductive activity (in vitro). Has retinol dehydrogenase activity towards all-trans-retinol (in vitro). Has 17-beta-hydroxysteroid dehydrogenase activity towards various steroids (in vitro). Converts 5-alpha-androstan-3-alpha,17-beta-diol to androsterone and estradiol to estrone (in vitro). Has 3-alpha-hydroxysteroid dehydrogenase activity towards androsterone (in vitro). The protein is 17-beta-hydroxysteroid dehydrogenase type 6 (Hsd17b6) of Rattus norvegicus (Rat).